A 316-amino-acid polypeptide reads, in one-letter code: Transaldolase (316 aa).

K125 acts as the Schiff-base intermediate with substrate in catalysis.

The protein belongs to the transaldolase family. Type 1 subfamily. As to quaternary structure, homodimer.

It is found in the cytoplasm. It carries out the reaction D-sedoheptulose 7-phosphate + D-glyceraldehyde 3-phosphate = D-erythrose 4-phosphate + beta-D-fructose 6-phosphate. Its pathway is carbohydrate degradation; pentose phosphate pathway; D-glyceraldehyde 3-phosphate and beta-D-fructose 6-phosphate from D-ribose 5-phosphate and D-xylulose 5-phosphate (non-oxidative stage): step 2/3. Transaldolase is important for the balance of metabolites in the pentose-phosphate pathway. This Acidovorax ebreus (strain TPSY) (Diaphorobacter sp. (strain TPSY)) protein is Transaldolase.